Here is a 404-residue protein sequence, read N- to C-terminus: Mevalonate kinase (404 aa).

ATP contacts are provided by residues Lys12, Ser130, and 135–141 (GAGLGSS). Ser141 and Glu184 together coordinate Mg(2+). The Proton acceptor role is filled by Asp195.

Belongs to the GHMP kinase family. Mevalonate kinase subfamily. As to quaternary structure, homodimer. The cofactor is Mg(2+).

The protein localises to the cytoplasm. It localises to the nucleus. It carries out the reaction (R)-mevalonate + ATP = (R)-5-phosphomevalonate + ADP + H(+). It participates in isoprenoid biosynthesis; isopentenyl diphosphate biosynthesis via mevalonate pathway; isopentenyl diphosphate from (R)-mevalonate: step 1/3. Its activity is regulated as follows. Farnesyl pyrophosphate and geranyl pyrophosphate inhibit mevalonate kinase by binding competitively at the ATP-binding site. Mevalonate kinase; part of the second module of ergosterol biosynthesis pathway that includes the middle steps of the pathway. Erg12 converts mevalonate into 5-phosphomevalonate. The second module is carried out in the vacuole and involves the formation of farnesyl diphosphate, which is also an important intermediate in the biosynthesis of ubiquinone, dolichol, heme and prenylated proteins. Activity by the mevalonate kinase erg12 first converts mevalonate into 5-phosphomevalonate. 5-phosphomevalonate is then further converted to 5-diphosphomevalonate by the phosphomevalonate kinase erg8. The diphosphomevalonate decarboxylase mvd1 then produces isopentenyl diphosphate. The isopentenyl-diphosphate delta-isomerase idi1 then catalyzes the 1,3-allylic rearrangement of the homoallylic substrate isopentenyl (IPP) to its highly electrophilic allylic isomer, dimethylallyl diphosphate (DMAPP). Finally the farnesyl diphosphate synthase fps1 catalyzes the sequential condensation of isopentenyl pyrophosphate with dimethylallyl pyrophosphate, and then with the resultant geranylpyrophosphate to the ultimate product farnesyl pyrophosphate. In Schizosaccharomyces pombe (strain 972 / ATCC 24843) (Fission yeast), this protein is Mevalonate kinase (erg12).